The primary structure comprises 306 residues: Pantothenate kinase (306 aa).

91–98 is a binding site for ATP; the sequence is GSVAVGKS.

It belongs to the prokaryotic pantothenate kinase family.

It is found in the cytoplasm. It catalyses the reaction (R)-pantothenate + ATP = (R)-4'-phosphopantothenate + ADP + H(+). It functions in the pathway cofactor biosynthesis; coenzyme A biosynthesis; CoA from (R)-pantothenate: step 1/5. In Streptococcus equi subsp. zooepidemicus (strain MGCS10565), this protein is Pantothenate kinase.